A 188-amino-acid chain; its full sequence is MIDKEKIKKAVRDILEAIGEDPDREGLLETPDRVARMYEEIFAGLHTDVKDVIKIFQEDEHQEIILVKDIPLYSMCEHHLLPFIGVAHVAYLPRKGRILGLSKLARIVDILAKRPQLQERLTSEIADTIMEAVNPLGVAVVIEAEHLCMTMRGIKKPGAKTVTSALRGIFRTDEKSRAEVMSLINSKK.

The Zn(2+) site is built by Cys76, His79, and Cys148.

It belongs to the GTP cyclohydrolase I family. Homomer.

The catalysed reaction is GTP + H2O = 7,8-dihydroneopterin 3'-triphosphate + formate + H(+). It participates in cofactor biosynthesis; 7,8-dihydroneopterin triphosphate biosynthesis; 7,8-dihydroneopterin triphosphate from GTP: step 1/1. The sequence is that of GTP cyclohydrolase 1 from Thermoanaerobacter pseudethanolicus (strain ATCC 33223 / 39E) (Clostridium thermohydrosulfuricum).